A 198-amino-acid polypeptide reads, in one-letter code: Protein uvp1 (198 aa).

A Resolvase/invertase-type recombinase catalytic domain is found at 1 to 140; that stretch reads MIIGYARKST…SGLAAARARG (140 aa). S9 functions as the O-(5'-phospho-DNA)-serine intermediate in the catalytic mechanism. Residues 168–187 constitute a DNA-binding region (H-T-H motif); sequence VGAVAKRFNVSRMTIYRYTT.

It belongs to the site-specific recombinase resolvase family.

In terms of biological role, cooperates with the mucAB genes in the DNA repair process. Could be a resolvase-invertase protein. This Escherichia coli protein is Protein uvp1 (uvp1).